The chain runs to 331 residues: Isopentenyl-diphosphate delta-isomerase (331 aa).

4 to 5 (RK) lines the substrate pocket. Residues 59–61 (AMT), S89, and N116 each bind FMN. Q146 is a substrate binding site. Position 147 (E147) interacts with Mg(2+). FMN contacts are provided by residues K178, S203, T208, 252-254 (GIR), and 273-274 (SR).

It belongs to the IPP isomerase type 2 family. As to quaternary structure, homooctamer. Dimer of tetramers. It depends on FMN as a cofactor. The cofactor is NADPH. Mg(2+) is required as a cofactor.

Its subcellular location is the cytoplasm. It carries out the reaction isopentenyl diphosphate = dimethylallyl diphosphate. Involved in the biosynthesis of isoprenoids. Catalyzes the 1,3-allylic rearrangement of the homoallylic substrate isopentenyl (IPP) to its allylic isomer, dimethylallyl diphosphate (DMAPP). This chain is Isopentenyl-diphosphate delta-isomerase, found in Streptococcus mutans serotype c (strain ATCC 700610 / UA159).